Consider the following 440-residue polypeptide: Xaa-Pro dipeptidase (440 aa).

Residues Asp244, Asp255, His335, Glu380, and Glu419 each contribute to the Mn(2+) site.

This sequence belongs to the peptidase M24B family. Bacterial-type prolidase subfamily. The cofactor is Mn(2+).

It catalyses the reaction Xaa-L-Pro dipeptide + H2O = an L-alpha-amino acid + L-proline. Functionally, splits dipeptides with a prolyl residue in the C-terminal position. This chain is Xaa-Pro dipeptidase, found in Shewanella baltica (strain OS185).